Reading from the N-terminus, the 801-residue chain is Mitochondrial intermediate peptidase (801 aa).

A mitochondrion-targeting transit peptide spans 1–41 (MKDQLLVPLRRRPWTCQKCLQRLQLPRHQTRRSFETAASPF). His564 contributes to the Zn(2+) binding site. Glu565 is a catalytic residue. Residues His568 and His571 each coordinate Zn(2+).

Belongs to the peptidase M3 family. The cofactor is Zn(2+).

It is found in the mitochondrion matrix. The catalysed reaction is Release of an N-terminal octapeptide as second stage of processing of some proteins imported into the mitochondrion.. Its function is as follows. Cleaves proteins, imported into the mitochondrion, to their mature size. While most mitochondrial precursor proteins are processed to the mature form in one step by mitochondrial processing peptidase (MPP), the sequential cleavage by MIP of an octapeptide after initial processing by MPP is a required step for a subgroup of nuclear-encoded precursor proteins destined for the matrix or the inner membrane. This chain is Mitochondrial intermediate peptidase (oct1), found in Aspergillus fumigatus (strain ATCC MYA-4609 / CBS 101355 / FGSC A1100 / Af293) (Neosartorya fumigata).